The primary structure comprises 507 residues: MAEEQARHVKNGLECIRALKAEPIGSLAVEEAMAAWSEISDNPGQDRATCKEEEAGSSGLSKPCLSAIGSTEGGAPRIRGQGSGESDDDAETLGIPSRNLQASSTGLQCYHVYDHSGEAVKGIQDADSIMVQSGLDGDSTLSGGDDESENSDVDIGEPDTEGYAITDRGSAPISMGFRASDVETAEGGEIHELLKLQSRGNNFPKLGKTLNVPPPPNPSRASTSETPIKKGTDARLASFGTEIASLLTGGATQCARKSPSEPSGPGAPAGNVPECVSNAALIQEWTPESGTTISPRSQNNEEGGDYYDDELFSDVQDIKTALAKIHEDNQKIISKLESLLLLKGEVESIKKQINRQNISISTLEGHLSSIMIAIPGLGKDPNDPTADVELNPDLKPIIGRDSGRALAEVLKKPVASRQLQGMTNGRTSSRGQLLKEFQLKPIGKKVSSAVGFVPDTGPASRSVIRSIIKSSRLEEDRKRYLMTLLDDIKGANDLAKFHQMLMKIIMK.

Residues 1–48 are interaction with N0; it reads MAEEQARHVKNGLECIRALKAEPIGSLAVEEAMAAWSEISDNPGQDRA. Disordered regions lie at residues 40 to 92, 133 to 168, 201 to 228, and 252 to 273; these read SDNP…DAET, SGLD…ITDR, NNFP…ETPI, and TQCA…GNVP. Ser86 carries the phosphoserine modification. The segment covering 133 to 143 has biased composition (low complexity); the sequence is SGLDGDSTLSG. Positions 144–160 are enriched in acidic residues; the sequence is GDDESENSDVDIGEPDT. Ser151 bears the Phosphoserine mark. Low complexity predominate over residues 260 to 270; it reads SEPSGPGAPAG. The tract at residues 304–376 is multimerization; that stretch reads GDYYDDELFS…LSSIMIAIPG (73 aa). Interaction with the L polymerase stretches follow at residues 361–377 and 396–410; these read STLE…IPGL and PIIG…AEVL. Positions 457-507 are x domain (XD); that stretch reads GPASRSVIRSIIKSSRLEEDRKRYLMTLLDDIKGANDLAKFHQMLMKIIMK. An interaction with the nucleocapsid (N-RNA) region spans residues 459-507; the sequence is ASRSVIRSIIKSSRLEEDRKRYLMTLLDDIKGANDLAKFHQMLMKIIMK.

This sequence belongs to the morbillivirus P protein family. As to quaternary structure, homotetramer. Interacts (via multimerization domain and XD domain) with polymerase L; this interaction forms the polymerase L-P complex. Interacts (via N-terminus) with N0 (via Ncore); this interaction allows P to chaperon N0 to avoid N polymerization and non-specific RNA binding before encapsidation. Interacts (via C-terminus) with N-RNA template (via Ntail); this interaction maintains the P/L complex anchored to the nucleocapsid template during the sequential transcription. Interacts (via C-terminus) with protein C this interaction allows C to associate with the ribonucleocapsid. In terms of processing, phosphorylation on serines by host CK2 is necessary for the formation of viral factories.

Essential cofactor of the RNA polymerase L that plays a central role in the transcription and replication by forming the polymerase complex with RNA polymerase L and recruiting L to the genomic N-RNA template for RNA synthesis. Also plays a central role in the encapsidation of nascent RNA chains by forming the encapsidation complex with the nucleocapsid protein N (N-P complex). Acts as a chaperone for newly synthesized free N protein, so-called N0, allowing encapsidation of nascent RNA chains during replication. The nucleoprotein protein N prevents excessive phosphorylation of P, which leads to down-regulation of viral transcription/ replication. Participates, together with N, in the formation of viral factories (viroplasms), which are large inclusions in the host cytoplasm where replication takes place. The polypeptide is Phosphoprotein (P/V) (Homo sapiens (Human)).